We begin with the raw amino-acid sequence, 134 residues long: UPF0412 protein YaaI (134 aa).

Positions 1–23 (MKSVFTISASLAISLMLCCTAQA) are cleaved as a signal peptide.

Belongs to the UPF0412 family.

The chain is UPF0412 protein YaaI from Escherichia coli (strain K12).